The sequence spans 154 residues: MYRMQLLSCIALSLALITNSAPTSSSTKKTQLQLEHLLLDLQMLLNGINNYKNPKLTRMLTFKFYMPKKATELKHLQCLEEELKPLEEVLNLAQSKNFHLRDTRDIISNINVLVLELKGSETTFTCEYDDDTATIIEFLNGWITFCQSIISTLT.

The first 20 residues, 1-20 (MYRMQLLSCIALSLALITNS), serve as a signal peptide directing secretion. Thr-23 carries an O-linked (GalNAc...) threonine glycan. Residues Cys-78 and Cys-126 are joined by a disulfide bond.

It belongs to the IL-2 family.

The protein localises to the secreted. In terms of biological role, cytokine produced by activated CD4-positive helper T-cells and to a lesser extend activated CD8-positive T-cells and natural killer (NK) cells that plays pivotal roles in the immune response and tolerance. Binds to a receptor complex composed of either the high-affinity trimeric IL-2R (IL2RA/CD25, IL2RB/CD122 and IL2RG/CD132) or the low-affinity dimeric IL-2R (IL2RB and IL2RG). Interaction with the receptor leads to oligomerization and conformation changes in the IL-2R subunits resulting in downstream signaling starting with phosphorylation of JAK1 and JAK3. In turn, JAK1 and JAK3 phosphorylate the receptor to form a docking site leading to the phosphorylation of several substrates including STAT5. This process leads to activation of several pathways including STAT, phosphoinositide-3-kinase/PI3K and mitogen-activated protein kinase/MAPK pathways. Functions as a T-cell growth factor and can increase NK-cell cytolytic activity as well. Promotes strong proliferation of activated B-cells and subsequently immunoglobulin production. Plays a pivotal role in regulating the adaptive immune system by controlling the survival and proliferation of regulatory T-cells, which are required for the maintenance of immune tolerance. Moreover, participates in the differentiation and homeostasis of effector T-cell subsets, including Th1, Th2, Th17 as well as memory CD8-positive T-cells. This is Interleukin-2 (IL2) from Papio hamadryas (Hamadryas baboon).